The chain runs to 572 residues: Oxygen-dependent choline dehydrogenase (572 aa).

Position 9-38 (9-38 (DYVIIGGGSAGSVLGARLSEDKDKNVLVLE)) interacts with FAD. Histidine 477 acts as the Proton acceptor in catalysis.

This sequence belongs to the GMC oxidoreductase family. The cofactor is FAD.

The enzyme catalyses choline + A = betaine aldehyde + AH2. It catalyses the reaction betaine aldehyde + NAD(+) + H2O = glycine betaine + NADH + 2 H(+). It participates in amine and polyamine biosynthesis; betaine biosynthesis via choline pathway; betaine aldehyde from choline (cytochrome c reductase route): step 1/1. Functionally, involved in the biosynthesis of the osmoprotectant glycine betaine. Catalyzes the oxidation of choline to betaine aldehyde and betaine aldehyde to glycine betaine at the same rate. In Staphylococcus epidermidis (strain ATCC 35984 / DSM 28319 / BCRC 17069 / CCUG 31568 / BM 3577 / RP62A), this protein is Oxygen-dependent choline dehydrogenase.